A 566-amino-acid chain; its full sequence is Proline--tRNA ligase (566 aa).

Belongs to the class-II aminoacyl-tRNA synthetase family. ProS type 1 subfamily. In terms of assembly, homodimer.

The protein resides in the cytoplasm. It carries out the reaction tRNA(Pro) + L-proline + ATP = L-prolyl-tRNA(Pro) + AMP + diphosphate. Functionally, catalyzes the attachment of proline to tRNA(Pro) in a two-step reaction: proline is first activated by ATP to form Pro-AMP and then transferred to the acceptor end of tRNA(Pro). As ProRS can inadvertently accommodate and process non-cognate amino acids such as alanine and cysteine, to avoid such errors it has two additional distinct editing activities against alanine. One activity is designated as 'pretransfer' editing and involves the tRNA(Pro)-independent hydrolysis of activated Ala-AMP. The other activity is designated 'posttransfer' editing and involves deacylation of mischarged Ala-tRNA(Pro). The misacylated Cys-tRNA(Pro) is not edited by ProRS. The sequence is that of Proline--tRNA ligase from Bacillus cytotoxicus (strain DSM 22905 / CIP 110041 / 391-98 / NVH 391-98).